Here is a 921-residue protein sequence, read N- to C-terminus: Ubiquitin carboxyl-terminal hydrolase 11 (921 aa).

Residues 1–16 (MAAVAADPAAAAVPAS) are compositionally biased toward low complexity. A disordered region spans residues 1–29 (MAAVAADPAAAAVPASAEDRETQPEAMPD). The DUSP domain maps to 28 to 133 (PDLDQQWRQI…DQPPIERKVI (106 aa)). At K194 the chain carries N6-acetyllysine. In terms of domain architecture, USP spans 257-889 (CGLTNLGNTC…AAYVLFYQRQ (633 aa)). C266 (nucleophile) is an active-site residue. Positions 592–697 (TKPTSDDDDG…DRTTSPEEAQ (106 aa)) are disordered. S596 carries the phosphoserine modification. Over residues 597–624 (DDDDGDEKGDENEDEDVEDDSSSEEEKE) the composition is skewed to acidic residues. Polar residues-rich tracts occupy residues 657 to 666 (LDNSLHTSQW) and 676 to 697 (FTLQ…EEAQ). Residue S692 is modified to Phosphoserine. The active-site Proton acceptor is H847. The segment at 893–921 (RRQSQTASSETPTSPASSSTPNSDIMDVN) is disordered. Low complexity predominate over residues 895-915 (QSQTASSETPTSPASSSTPNS). At S906 the chain carries Phosphoserine.

This sequence belongs to the peptidase C19 family. In terms of assembly, monomer. Associated component of the Polycomb group (PcG) multiprotein PRC1-like complex. Interacts with RANBP9/RANBPM. Interacts with BRCA2. Interacts with CHUK/IKKA. Interacts with NFKBIA. Interacts with SPRY3, RAE1, MYCBP2/PAM, and KCTD6.

Its subcellular location is the nucleus. It is found in the cytoplasm. The protein localises to the chromosome. The catalysed reaction is Thiol-dependent hydrolysis of ester, thioester, amide, peptide and isopeptide bonds formed by the C-terminal Gly of ubiquitin (a 76-residue protein attached to proteins as an intracellular targeting signal).. Protease that can remove conjugated ubiquitin from target proteins and polyubiquitin chains. Inhibits the degradation of target proteins by the proteasome. Cleaves preferentially 'Lys-6' and 'Lys-63'-linked ubiquitin chains. Has lower activity with 'Lys-11' and 'Lys-33'-linked ubiquitin chains, and extremely low activity with 'Lys-27', 'Lys-29' and 'Lys-48'-linked ubiquitin chains (in vitro). Plays a role in the regulation of pathways leading to NF-kappa-B activation. Plays a role in the regulation of DNA repair after double-stranded DNA breaks. Acts as a chromatin regulator via its association with the Polycomb group (PcG) multiprotein PRC1-like complex; may act by deubiquitinating components of the PRC1-like comple. Promotes cell proliferation by deubiquitinating phosphorylated E2F1x. The sequence is that of Ubiquitin carboxyl-terminal hydrolase 11 from Rattus norvegicus (Rat).